Here is a 590-residue protein sequence, read N- to C-terminus: Protein NRT1/ PTR FAMILY 6.3 (590 aa).

Transmembrane regions (helical) follow at residues 46 to 66 (LTTLGIGVNLVTYLTGTMHLG) and 77 to 97 (FLGTSFMLCLLGGFIADTFLG). Threonine 101 bears the Phosphothreonine; by CIPK23 mark. Transmembrane regions (helical) follow at residues 102–122 (IAIFAAIQATGVSILTLSTII), 143–163 (GIQLTVLYLALYLTALGTGGV), 193–213 (FFFCINVGSLLAVTVLVYVQD), 219–239 (WGYGICAFAIVLALSVFLAGT), 342–362 (MLPIWATCILFWTVHAQLTTL), 374–394 (IGSFEIPPASMAVFYVGGLLL), 423–443 (IGLGLFFGSMAMAVAALVELK), 460–480 (LGFYLLIPQYLIVGIGEALIY), 501–521 (GLLLSTLALGFFFSSVLVTIV), and 542–562 (YNFYWLVAVLVALNFLIFLVF). Positions 356 and 360 each coordinate substrate.

This sequence belongs to the major facilitator superfamily. Proton-dependent oligopeptide transporter (POT/PTR) (TC 2.A.17) family. In terms of assembly, monomer and homodimer. The dimer has the 2 monomers in the same orientation. Interacts with CIPK23. Acts as a high-affinity nitrate transporter when phosphorylated and as a low-affinity transporter when dephosphorylated. Forms homodimer when unphosphorylated and monomer when phosphorylated. Low nitrogen concentration in the medium stimulates phosphorylation. Phosphorylation also regulates the nitrate signaling. As to expression, expressed in the stele in lateral root primordia before emergence and in the tip of primary and emerged lateral roots. Detected in emerging and immature leaves, guard cells, flower buds, style, stigma, anthers and pollen grains. Not detected in the shoot apical meristem.

The protein localises to the membrane. In terms of biological role, dual affinity nitrate transporter. Involved in proton-dependent nitrate uptake and in the regulation of the nitrate transporter NRT2.1. Also acts as a nitrate sensor that trigger a specific signaling pathway stimulating lateral root growth and seed germination. The uptake activity is not required for sensor function. Displays an auxin transport facilitation inhibited by high nitrate concentration. Required to prevent auxin accumulation in preemerged lateral root primordia and young lateral roots when external nitrate concentration is low or null. May be involved in the basipetal transport of auxin out of the lateral root tips. Acts as a bidirectional transporter involved in root-to-shoot nitrate translocation. Recognizes specifically nitrate and chlorate, but not nitrite, alanine, sulfate, phosphate or the di-peptide Ala-Ala. The chain is Protein NRT1/ PTR FAMILY 6.3 (NPF6.3) from Arabidopsis thaliana (Mouse-ear cress).